Consider the following 232-residue polypeptide: Flagellar L-ring protein (232 aa).

Positions 1-21 are cleaved as a signal peptide; the sequence is MQKNAAHTYAISSLLVLSLTG. Cys22 carries the N-palmitoyl cysteine lipid modification. Cys22 carries the S-diacylglycerol cysteine lipid modification.

It belongs to the FlgH family. As to quaternary structure, the basal body constitutes a major portion of the flagellar organelle and consists of four rings (L,P,S, and M) mounted on a central rod.

It localises to the cell outer membrane. It is found in the bacterial flagellum basal body. Its function is as follows. Assembles around the rod to form the L-ring and probably protects the motor/basal body from shearing forces during rotation. The polypeptide is Flagellar L-ring protein (Shigella boydii serotype 18 (strain CDC 3083-94 / BS512)).